The chain runs to 118 residues: Basic phospholipase A2 PA-15 (118 aa).

7 disulfides stabilise this stretch: cysteine 11/cysteine 71, cysteine 27/cysteine 117, cysteine 29/cysteine 45, cysteine 44/cysteine 98, cysteine 51/cysteine 91, cysteine 60/cysteine 84, and cysteine 78/cysteine 89. Ca(2+) contacts are provided by tyrosine 28, glycine 30, and glycine 32. Histidine 48 is a catalytic residue. Aspartate 49 contributes to the Ca(2+) binding site. Aspartate 92 is a catalytic residue.

It belongs to the phospholipase A2 family. Group I subfamily. D49 sub-subfamily. It depends on Ca(2+) as a cofactor. In terms of tissue distribution, expressed by the venom gland.

The protein resides in the secreted. The catalysed reaction is a 1,2-diacyl-sn-glycero-3-phosphocholine + H2O = a 1-acyl-sn-glycero-3-phosphocholine + a fatty acid + H(+). In terms of biological role, PLA2 catalyzes the calcium-dependent hydrolysis of the 2-acyl groups in 3-sn-phosphoglycerides. This chain is Basic phospholipase A2 PA-15, found in Pseudechis australis (Mulga snake).